Consider the following 375-residue polypeptide: Arsenite methyltransferase (375 aa).

S335 is subject to Phosphoserine.

Belongs to the methyltransferase superfamily. Arsenite methyltransferase family.

The protein resides in the cytoplasm. It localises to the cytosol. The enzyme catalyses arsenic triglutathione + [thioredoxin]-dithiol + S-adenosyl-L-methionine + 2 H2O = methylarsonous acid + [thioredoxin]-disulfide + 3 glutathione + S-adenosyl-L-homocysteine + H(+). It catalyses the reaction arsenic triglutathione + 2 [thioredoxin]-dithiol + 2 S-adenosyl-L-methionine + H2O = dimethylarsinous acid + 2 [thioredoxin]-disulfide + 3 glutathione + 2 S-adenosyl-L-homocysteine + 2 H(+). It carries out the reaction arsenic triglutathione + 3 [thioredoxin]-dithiol + 3 S-adenosyl-L-methionine = trimethylarsine + 3 [thioredoxin]-disulfide + 3 glutathione + 3 S-adenosyl-L-homocysteine + 3 H(+). Functionally, catalyzes the transfer of a methyl group from AdoMet to trivalent arsenicals producing methylated and dimethylated arsenicals. It methylates arsenite to form methylarsonate, Me-AsO(3)H(2), which is reduced by methylarsonate reductase to methylarsonite, Me-As(OH)2. Methylarsonite is also a substrate and it is converted into the much less toxic compound dimethylarsinate (cacodylate), Me(2)As(O)-OH. The protein is Arsenite methyltransferase (AS3MT) of Homo sapiens (Human).